A 184-amino-acid polypeptide reads, in one-letter code: Protein DP71L (184 aa).

Residues 1 to 15 (MSRRNKRSRRRRKKP) are compositionally biased toward basic residues. The interval 1–41 (MSRRNKRSRRRRKKPLNTIQPGPSKPSAQDEPIKSVSHHSS) is disordered. Important for host CHOP inhibition stretches follow at residues 125-127 (VYF) and 169-173 (LSAVL).

It belongs to the asfivirus DP71L family. As to quaternary structure, interacts (via C-terminus) with host PPP1CB.

Interacts with the host phosphatase PP1 catalytic subunit (PPP1CB) and recruits it to dephosphorylate EIF2S1/eIF2alpha and therefore restores the host translation that has been shut-down by the host. Also inhibits the EIF2S1/eIF2alpha-ATF4-DDIT3/CHOP pathway. The polypeptide is Protein DP71L (Ornithodoros (relapsing fever ticks)).